The following is a 204-amino-acid chain: Ras-related protein RabQ (204 aa).

Position 12-19 (12-19 (GPPFVGKS)) interacts with GTP. The short motif at 34–42 (MDTTIGVEF) is the Effector region element. GTP-binding positions include 60-64 (DTAGQ) and 118-121 (NKCD). 2 S-geranylgeranyl cysteine lipidation sites follow: Cys202 and Cys203.

This sequence belongs to the small GTPase superfamily. Rab family.

Its subcellular location is the cell membrane. In Dictyostelium discoideum (Social amoeba), this protein is Ras-related protein RabQ (rabQ).